We begin with the raw amino-acid sequence, 218 residues long: Octanoyltransferase (218 aa).

The region spanning 32 to 214 is the BPL/LPL catalytic domain; it reads VLTADEIWLV…HFTQLLGYND (183 aa). Substrate-binding positions include 71-78, 143-145, and 156-158; these read RGGQITYH, SLG, and GLA. Catalysis depends on Cys-174, which acts as the Acyl-thioester intermediate.

This sequence belongs to the LipB family.

The protein resides in the cytoplasm. The enzyme catalyses octanoyl-[ACP] + L-lysyl-[protein] = N(6)-octanoyl-L-lysyl-[protein] + holo-[ACP] + H(+). The protein operates within protein modification; protein lipoylation via endogenous pathway; protein N(6)-(lipoyl)lysine from octanoyl-[acyl-carrier-protein]: step 1/2. Catalyzes the transfer of endogenously produced octanoic acid from octanoyl-acyl-carrier-protein onto the lipoyl domains of lipoate-dependent enzymes. Lipoyl-ACP can also act as a substrate although octanoyl-ACP is likely to be the physiological substrate. The polypeptide is Octanoyltransferase (Histophilus somni (strain 2336) (Haemophilus somnus)).